The following is a 223-amino-acid chain: MQTWSDVLGQEKKQAYFQETMDFVRREREAGKIVYPPAADVFNAFKYTEFADVKVVILGQDPYHGPNQAHGLCFSVLPGVAVPPSLVNIYKELHRDIPGFEIPSHGYLLSWAQQGVLLLNTVLTVEAGKAHSHASSGWEHFTDRVIAALNEHREGLVFLLWGNHAQKKGQYIDRQRHHVLMAPHPSPLSAHRGFLGCGHFSQTNQFLTDADKQPINWQIAPIA.

Residue Asp61 is the Proton acceptor of the active site.

Belongs to the uracil-DNA glycosylase (UDG) superfamily. UNG family.

Its subcellular location is the cytoplasm. It carries out the reaction Hydrolyzes single-stranded DNA or mismatched double-stranded DNA and polynucleotides, releasing free uracil.. In terms of biological role, excises uracil residues from the DNA which can arise as a result of misincorporation of dUMP residues by DNA polymerase or due to deamination of cytosine. This chain is Uracil-DNA glycosylase, found in Tolumonas auensis (strain DSM 9187 / NBRC 110442 / TA 4).